The following is a 767-amino-acid chain: MATYLEFIQQNEERDGVRFSWNVWPSSRLEATRMVVPLACLLTPLRERPDLPPVQYEPVLCSRPTCKAVLNPLCQVDYRAKLWACNFCFQRNQFPPAYAGISEVNQPAELMPQFSTIEYIVQRGPQTPLIFLYVVDTCLEEEDLQALKESLQMSLSLLPADALVGLITFGRMIQVHELSCEGISKSYVFRGTKDLTAKQIQDMLGLSRPAVPIQQGRPLQAPEQPVISSRFLQPVHKIDMNLTDLLGELQRDPWPVTQGKRPLRSTGVALSIAVGLLEGTFPNTGARIMLFTGGPPTQGPGMVVGDELKTPIRSWHDIEKDNARFMKKATKHYETLANRTATNGHCIDIYACALDQTGLLEMKCCANLTGGHMVMGDSFNTSLFKQTFQRVFNKGLNGEFRMAFGANLEVKTSRELKIAGAIGPCVSLNVKGPCVSENELGIGGTSQWKICGLDPCTTLAIYFEVVNQHNAPIPQGGRGAVQFVTQYQHSSTQKRIRVTTIARNWADAQSQLQHIEAAFDQEAAAVLMARLGVYRAESEEGPDVLRWLDRQLIRLCQKFGQYNKDDPNSFRLSESFSLYPQFMFHLRRSPFLQVFNNSPDESSYYRHHFARQDLTQSLIMIQPILYAYSFHGPPEPVLLDSSSILPDRILLMDTFFQIVIYLGETIAQWQKAGYQDMPEYENFKHLLQAPLDDAQEILQTRFPMPRYVHTEHGGSQARFLLSKVNPSQTHNNLYAWGQESGAPILTDDVSLQVFMDHLKKLAVSSAA.

Zn(2+) contacts are provided by cysteine 61, cysteine 66, cysteine 85, and cysteine 88. One copy of the Gelsolin-like repeat lies at 634 to 720 (PEPVLLDSSS…EHGGSQARFL (87 aa)).

Belongs to the SEC23/SEC24 family. SEC23 subfamily. In terms of assembly, COPII is composed of at least five proteins: the Sec23/24 complex, the Sec13/31 complex and Sar1.

The protein localises to the cytoplasmic vesicle. It is found in the COPII-coated vesicle membrane. Its subcellular location is the endoplasmic reticulum membrane. It localises to the cytoplasm. The protein resides in the cytosol. Its function is as follows. Component of the coat protein complex II (COPII) which promotes the formation of transport vesicles from the endoplasmic reticulum (ER). The coat has two main functions, the physical deformation of the endoplasmic reticulum membrane into vesicles and the selection of cargo molecules for their transport to the Golgi complex. In Gallus gallus (Chicken), this protein is Protein transport protein Sec23A.